The following is a 111-amino-acid chain: Putative FAD-linked sulfhydryl oxidase 347L (111 aa).

In terms of domain architecture, ERV/ALR sulfhydryl oxidase spans T2–W109. Residues C49 and C52 are joined by a disulfide bond.

Belongs to the IIV-6 347L family. Requires FAD as cofactor.

It catalyses the reaction 2 R'C(R)SH + O2 = R'C(R)S-S(R)CR' + H2O2. Its function is as follows. FAD-dependent sulfhydryl oxidase that catalyzes disulfide bond formation. The chain is Putative FAD-linked sulfhydryl oxidase 347L from Invertebrate iridescent virus 6 (IIV-6).